Here is a 194-residue protein sequence, read N- to C-terminus: Transcriptional repressor NrdR (194 aa).

Residues 3-33 (CPFCGHADDRVLDTRVQKDGSIRRRRECLEC) fold into a zinc finger. Positions 48–138 (PFIIKKDGRR…VYRTFKDVQE (91 aa)) constitute an ATP-cone domain. Positions 168–179 (ESEKSTNHETDS) are enriched in basic and acidic residues. Residues 168–194 (ESEKSTNHETDSKTPSPRTRPPGPLSN) are disordered. Pro residues predominate over residues 185–194 (RTRPPGPLSN).

This sequence belongs to the NrdR family. Requires Zn(2+) as cofactor.

Negatively regulates transcription of bacterial ribonucleotide reductase nrd genes and operons by binding to NrdR-boxes. This is Transcriptional repressor NrdR from Bdellovibrio bacteriovorus (strain ATCC 15356 / DSM 50701 / NCIMB 9529 / HD100).